The following is a 495-amino-acid chain: ATP synthase subunit beta, chloroplastic (495 aa).

172 to 179 (GGAGVGKT) provides a ligand contact to ATP.

Belongs to the ATPase alpha/beta chains family. In terms of assembly, F-type ATPases have 2 components, CF(1) - the catalytic core - and CF(0) - the membrane proton channel. CF(1) has five subunits: alpha(3), beta(3), gamma(1), delta(1), epsilon(1). CF(0) has four main subunits: a(1), b(1), b'(1) and c(9-12).

Its subcellular location is the plastid. The protein resides in the chloroplast thylakoid membrane. The catalysed reaction is ATP + H2O + 4 H(+)(in) = ADP + phosphate + 5 H(+)(out). Functionally, produces ATP from ADP in the presence of a proton gradient across the membrane. The catalytic sites are hosted primarily by the beta subunits. The sequence is that of ATP synthase subunit beta, chloroplastic from Hyacinthoides non-scripta (English bluebell).